The following is a 365-amino-acid chain: Peptide chain release factor 2 (365 aa).

Residue glutamine 252 is modified to N5-methylglutamine.

The protein belongs to the prokaryotic/mitochondrial release factor family. Methylated by PrmC. Methylation increases the termination efficiency of RF2.

Its subcellular location is the cytoplasm. Its function is as follows. Peptide chain release factor 2 directs the termination of translation in response to the peptide chain termination codons UGA and UAA. The sequence is that of Peptide chain release factor 2 from Escherichia coli (strain K12 / MC4100 / BW2952).